A 368-amino-acid chain; its full sequence is Serine/threonine-protein kinase CAK1 (368 aa).

Positions 1-368 (MKLDSIDITH…QRILQELEKP (368 aa)) constitute a Protein kinase domain. The active-site Proton acceptor is Asp156.

This sequence belongs to the protein kinase superfamily. CMGC Ser/Thr protein kinase family. CDC2/CDKX subfamily.

The enzyme catalyses L-seryl-[protein] + ATP = O-phospho-L-seryl-[protein] + ADP + H(+). It carries out the reaction L-threonyl-[protein] + ATP = O-phospho-L-threonyl-[protein] + ADP + H(+). The chain is Serine/threonine-protein kinase CAK1 (CAK1) from Saccharomyces cerevisiae (strain ATCC 204508 / S288c) (Baker's yeast).